Consider the following 602-residue polypeptide: Arginine--tRNA ligase (602 aa).

The 'HIGH' region signature appears at 132–142 (ANPTGPLHVGH).

Belongs to the class-I aminoacyl-tRNA synthetase family. In terms of assembly, monomer.

It is found in the cytoplasm. It carries out the reaction tRNA(Arg) + L-arginine + ATP = L-arginyl-tRNA(Arg) + AMP + diphosphate. The sequence is that of Arginine--tRNA ligase from Cupriavidus metallidurans (strain ATCC 43123 / DSM 2839 / NBRC 102507 / CH34) (Ralstonia metallidurans).